A 313-amino-acid polypeptide reads, in one-letter code: S-methyl-5'-thioadenosine phosphorylase (313 aa).

Phosphate contacts are provided by residues T20, 68-69 (RH), and 101-102 (SA). M203 contacts substrate. S204 contributes to the phosphate binding site. Position 227 to 229 (227 to 229 (DYD)) interacts with substrate.

It belongs to the PNP/MTAP phosphorylase family. MTAP subfamily. As to quaternary structure, homotrimer.

It is found in the cytoplasm. The protein localises to the nucleus. The catalysed reaction is S-methyl-5'-thioadenosine + phosphate = 5-(methylsulfanyl)-alpha-D-ribose 1-phosphate + adenine. It functions in the pathway amino-acid biosynthesis; L-methionine biosynthesis via salvage pathway; S-methyl-5-thio-alpha-D-ribose 1-phosphate from S-methyl-5'-thioadenosine (phosphorylase route): step 1/1. In terms of biological role, catalyzes the reversible phosphorylation of S-methyl-5'-thioadenosine (MTA) to adenine and 5-methylthioribose-1-phosphate. Involved in the breakdown of MTA, a major by-product of polyamine biosynthesis. Responsible for the first step in the methionine salvage pathway after MTA has been generated from S-adenosylmethionine. Has broad substrate specificity with 6-aminopurine nucleosides as preferred substrates. The chain is S-methyl-5'-thioadenosine phosphorylase from Ajellomyces capsulatus (strain G186AR / H82 / ATCC MYA-2454 / RMSCC 2432) (Darling's disease fungus).